A 455-amino-acid polypeptide reads, in one-letter code: Epoxide hydrolase 1 (455 aa).

A helical; Signal-anchor for type III membrane protein transmembrane segment spans residues 1-21 (MWLELVLASLLGFVIYWFVSR). The Cytoplasmic segment spans residues 22–455 (DKEETLPLGD…RKFVSLAELQ (434 aa)). The Nucleophile role is filled by Asp-226. Arg-295 is modified (dimethylated arginine). Tyr-374 (proton donor) is an active-site residue. His-431 functions as the Proton acceptor in the catalytic mechanism. The residue at position 439 (Lys-439) is an N6-acetyllysine.

The protein belongs to the peptidase S33 family.

It is found in the microsome membrane. The protein localises to the endoplasmic reticulum membrane. The enzyme catalyses cis-stilbene oxide + H2O = (1R,2R)-hydrobenzoin. It catalyses the reaction 1-(4-methoxyphenyl)-N-methyl-N-[(3-methyloxetan-3-yl)methyl]methanamine + H2O = 2-{[(4-methoxybenzyl)(methyl)amino]methyl}-2-methylpropane-1,3-diol. The catalysed reaction is 8,9-epoxy-(5Z,11Z,14Z)-eicosatrienoate + H2O = 8,9-dihydroxy-(5Z,11Z,14Z)-eicosatrienoate. It carries out the reaction 11,12-epoxy-(5Z,8Z,14Z)-eicosatrienoate + H2O = 11,12-dihydroxy-(5Z,8Z,14Z)-eicosatrienoate. The enzyme catalyses 2-(5Z,8Z,11Z,14Z-eicosatetraenoyl)-glycerol + H2O = glycerol + (5Z,8Z,11Z,14Z)-eicosatetraenoate + H(+). Inhibited by 10-hydroxystearamide and methoxy-arachidonyl fluorophosphate. Biotransformation enzyme that catalyzes the hydrolysis of arene and aliphatic epoxides to less reactive and more water soluble dihydrodiols by the trans addition of water. May play a role in the metabolism of endogenous lipids such as epoxide-containing fatty acids. Metabolizes the abundant endocannabinoid 2-arachidonoylglycerol (2-AG) to free arachidonic acid (AA) and glycerol. Binds 20(S)-hydroxycholesterol (20(S)-OHC). The polypeptide is Epoxide hydrolase 1 (Rattus norvegicus (Rat)).